A 92-amino-acid polypeptide reads, in one-letter code: UPF0223 protein SSP1692 (92 aa).

The protein belongs to the UPF0223 family.

In Staphylococcus saprophyticus subsp. saprophyticus (strain ATCC 15305 / DSM 20229 / NCIMB 8711 / NCTC 7292 / S-41), this protein is UPF0223 protein SSP1692.